Here is a 321-residue protein sequence, read N- to C-terminus: Cytochrome c biogenesis protein CcsA (321 aa).

The next 8 membrane-spanning stretches (helical) occupy residues 17–37 (IVSI…IVGL), 44–64 (GMIS…IYSG), 71–91 (LYES…IPYF), 98–118 (LSLV…SGLL), 143–163 (MVLS…LLVI), 225–245 (VISL…VWAN), 258–275 (ETWA…LHTR), and 286–306 (AIVA…VNLL).

Belongs to the CcmF/CycK/Ccl1/NrfE/CcsA family. May interact with Ccs1.

The protein localises to the plastid. Its subcellular location is the chloroplast thylakoid membrane. Functionally, required during biogenesis of c-type cytochromes (cytochrome c6 and cytochrome f) at the step of heme attachment. This is Cytochrome c biogenesis protein CcsA from Buxus microphylla (Littleleaf boxwood).